Reading from the N-terminus, the 253-residue chain is Demethylmenaquinone methyltransferase (253 aa).

Residues Thr-62, Asp-80, 102-103 (DA), and Ser-119 each bind S-adenosyl-L-methionine.

The protein belongs to the class I-like SAM-binding methyltransferase superfamily. MenG/UbiE family.

It carries out the reaction a 2-demethylmenaquinol + S-adenosyl-L-methionine = a menaquinol + S-adenosyl-L-homocysteine + H(+). The protein operates within quinol/quinone metabolism; menaquinone biosynthesis; menaquinol from 1,4-dihydroxy-2-naphthoate: step 2/2. In terms of biological role, methyltransferase required for the conversion of demethylmenaquinol (DMKH2) to menaquinol (MKH2). This is Demethylmenaquinone methyltransferase from Paenarthrobacter aurescens (strain TC1).